Reading from the N-terminus, the 500-residue chain is Probable cytosol aminopeptidase (500 aa).

Mn(2+) is bound by residues K265 and D270. K277 is a catalytic residue. The Mn(2+) site is built by D288, D347, and E349. The active site involves R351.

Belongs to the peptidase M17 family. It depends on Mn(2+) as a cofactor.

It localises to the cytoplasm. It catalyses the reaction Release of an N-terminal amino acid, Xaa-|-Yaa-, in which Xaa is preferably Leu, but may be other amino acids including Pro although not Arg or Lys, and Yaa may be Pro. Amino acid amides and methyl esters are also readily hydrolyzed, but rates on arylamides are exceedingly low.. The enzyme catalyses Release of an N-terminal amino acid, preferentially leucine, but not glutamic or aspartic acids.. In terms of biological role, presumably involved in the processing and regular turnover of intracellular proteins. Catalyzes the removal of unsubstituted N-terminal amino acids from various peptides. This chain is Probable cytosol aminopeptidase, found in Corynebacterium glutamicum (strain ATCC 13032 / DSM 20300 / JCM 1318 / BCRC 11384 / CCUG 27702 / LMG 3730 / NBRC 12168 / NCIMB 10025 / NRRL B-2784 / 534).